We begin with the raw amino-acid sequence, 410 residues long: Chaperone protein dnaJ 15 (410 aa).

Residues 17-82 (DPYEVLCVSK…EKRRHYDNAG (66 aa)) form the J domain. Residues 284 to 344 (AKTYEDTTEK…TVDELLKQRD (61 aa)) adopt a coiled-coil conformation. A disordered region spans residues 351–410 (SVVKTPSGNNLSNGSSSKAQGDESKGDGDSAGEEGGTENRDKSKRKWFNLNLKGSDKKLG). The span at 357–367 (SGNNLSNGSSS) shows a compositional bias: low complexity.

Belongs to the DnaJ family. B/II subfamily. As to expression, expressed at high levels in root cap, root tip meristematic region and elongation zones, and at lower levels in mature part of roots (at protein level). Constitutively expressed in seedlings, etiolated or not, roots, rosette leaves, cauline leaves, stems, flowers, siliques and pollen.

The protein resides in the cytoplasm. Its subcellular location is the cytoskeleton. It is found in the endoplasmic reticulum membrane. It localises to the golgi apparatus membrane. Its function is as follows. Plays a continuous role in plant development probably in the structural organization of compartments. Seems to be involved in early gravitropic signal transduction within the gravity-perceiving cells (statocytes), where it influences pH changes and auxin distribution. Probably affects the localization and/or activity of auxin efflux carrier components (PIN proteins) or other proteins involved in lateral auxin transport. This is Chaperone protein dnaJ 15 (ATJ15) from Arabidopsis thaliana (Mouse-ear cress).